Consider the following 164-residue polypeptide: Urease subunit beta (164 aa).

2 stretches are compositionally biased toward polar residues: residues 1–10 and 20–32; these read MSTKTNSTKA and TNRGTKSSAGYSE. The interval 1-32 is disordered; the sequence is MSTKTNSTKATSEKTDSLKTNRGTKSSAGYSE.

The protein belongs to the urease beta subunit family. In terms of assembly, heterotrimer of UreA (gamma), UreB (beta) and UreC (alpha) subunits. Three heterotrimers associate to form the active enzyme.

The protein resides in the cytoplasm. The enzyme catalyses urea + 2 H2O + H(+) = hydrogencarbonate + 2 NH4(+). The protein operates within nitrogen metabolism; urea degradation; CO(2) and NH(3) from urea (urease route): step 1/1. The polypeptide is Urease subunit beta (Yersinia enterocolitica serotype O:8 / biotype 1B (strain NCTC 13174 / 8081)).